The chain runs to 396 residues: CCA-adding enzyme (396 aa).

The ATP site is built by Gly32 and Arg35. Residues Gly32 and Arg35 each coordinate CTP. Mg(2+) contacts are provided by Asp45 and Asp47. ATP contacts are provided by Arg116, Asp159, Arg162, Arg165, and Arg168. 5 residues coordinate CTP: Arg116, Asp159, Arg162, Arg165, and Arg168.

This sequence belongs to the tRNA nucleotidyltransferase/poly(A) polymerase family. Bacterial CCA-adding enzyme type 3 subfamily. Homodimer. Mg(2+) serves as cofactor.

The enzyme catalyses a tRNA precursor + 2 CTP + ATP = a tRNA with a 3' CCA end + 3 diphosphate. It catalyses the reaction a tRNA with a 3' CCA end + 2 CTP + ATP = a tRNA with a 3' CCACCA end + 3 diphosphate. In terms of biological role, catalyzes the addition and repair of the essential 3'-terminal CCA sequence in tRNAs without using a nucleic acid template. Adds these three nucleotides in the order of C, C, and A to the tRNA nucleotide-73, using CTP and ATP as substrates and producing inorganic pyrophosphate. tRNA 3'-terminal CCA addition is required both for tRNA processing and repair. Also involved in tRNA surveillance by mediating tandem CCA addition to generate a CCACCA at the 3' terminus of unstable tRNAs. While stable tRNAs receive only 3'-terminal CCA, unstable tRNAs are marked with CCACCA and rapidly degraded. The polypeptide is CCA-adding enzyme (Lactobacillus delbrueckii subsp. bulgaricus (strain ATCC BAA-365 / Lb-18)).